Here is a 156-residue protein sequence, read N- to C-terminus: Keratin, high-sulfur matrix protein, B2B (156 aa).

Ala-1 is modified (N-acetylalanine). 4 consecutive repeats follow at residues 26–35 (PTCSQTSCCQ), 36–45 (PTSIQTSCCQ), 46–55 (PISIQTSCCQ), and 56–65 (PTCLQTSGCE).

Functionally, the keratin products of mammalian epidermal derivatives such as wool and hair consist of microfibrils embedded in a rigid matrix of other proteins. The matrix proteins include the high-sulfur and high-tyrosine keratins, having molecular weights of 6-20 kDa, whereas the microfibrils contain the larger, low-sulfur keratins (40-56 kDa). The sequence is that of Keratin, high-sulfur matrix protein, B2B from Ovis aries (Sheep).